Consider the following 445-residue polypeptide: Retrovirus-related Pol polyprotein from type-1 retrotransposable element R2 (445 aa).

The 114-residue stretch at 1 to 114 (QPSVFNLVKW…LSRDDSLAKA (114 aa)) folds into the Reverse transcriptase domain. The segment at 115–445 (MLASAGPAAE…GATPRQLIEY (331 aa)) is nucleic acid-binding endonuclease. Positions 380 to 389 (GPRPAHHHQP) are enriched in basic residues. The segment at 380–445 (GPRPAHHHQP…GATPRQLIEY (66 aa)) is disordered. Over residues 396–405 (ATANTGTLQS) the composition is skewed to polar residues.

It catalyses the reaction DNA(n) + a 2'-deoxyribonucleoside 5'-triphosphate = DNA(n+1) + diphosphate. This chain is Retrovirus-related Pol polyprotein from type-1 retrotransposable element R2, found in Popillia japonica (Japanese beetle).